We begin with the raw amino-acid sequence, 102 residues long: Spexin prohormone 1 (102 aa).

The signal sequence occupies residues 1-26; the sequence is MKDLRTLAAYALALLLLATFVSYSRS. The propeptide occupies 27 to 35; the sequence is APMGSFQRR. Glutamine 49 is modified (glutamine amide). Residues 50-102 constitute a propeptide that is removed on maturation; sequence GRRFVSEDRNEGDLYDTIRLESQSQNTENLSISKAAAFLLNVLQQARDEGEPY.

The protein belongs to the spexin family. As to expression, expressed in the anterior hypothalamus, ventromedial thalamic nucleus and medial longitudinal fasciculus of the brain (at protein level). Widely expressed. Expressed predominantly in the spleen, kidney, liver and testis. Expressed in olfactory bulb, pituitary, telencephalon, diencephalons, spinal cord, optic tectum, cerebellum and hypothalamus of the brain.

The protein resides in the secreted. Its subcellular location is the extracellular space. It localises to the cytoplasmic vesicle. It is found in the secretory vesicle. In terms of biological role, plays a role in the regulation of food intake and body weight and in reproduction. May also play a role as a central modulator of cardiovascular and renal function and nociception. Functionally, brain administration of the peptide inhibits food consumption. May function as a satiety factor for feeding control. Involved in the negative regulation of the reproductive axis by inhibiting luteinizing hormone secretion from pituitary cells. The chain is Spexin prohormone 1 (spx) from Carassius auratus (Goldfish).